Consider the following 214-residue polypeptide: 3,4-dihydroxy-2-butanone 4-phosphate synthase (214 aa).

D-ribulose 5-phosphate is bound by residues 37–38, Asp-42, 150–154, and Glu-174; these read RE and RRGHT. Glu-38 is a binding site for Mg(2+). Residue His-153 coordinates Mg(2+).

This sequence belongs to the DHBP synthase family. Homodimer. The cofactor is Mg(2+). Mn(2+) serves as cofactor.

It carries out the reaction D-ribulose 5-phosphate = (2S)-2-hydroxy-3-oxobutyl phosphate + formate + H(+). It participates in cofactor biosynthesis; riboflavin biosynthesis; 2-hydroxy-3-oxobutyl phosphate from D-ribulose 5-phosphate: step 1/1. Its function is as follows. Catalyzes the conversion of D-ribulose 5-phosphate to formate and 3,4-dihydroxy-2-butanone 4-phosphate. This chain is 3,4-dihydroxy-2-butanone 4-phosphate synthase, found in Desulfotalea psychrophila (strain LSv54 / DSM 12343).